Consider the following 193-residue polypeptide: dCTP deaminase (193 aa).

Residues 110-115 (RSSLAR), Asp-128, 136-138 (VLE), Tyr-171, Lys-178, and Gln-182 each bind dCTP. Glu-138 acts as the Proton donor/acceptor in catalysis. Residues 169-193 (RPYNSRQDAKYKGQQGAVASRIDKD) form a disordered region.

Belongs to the dCTP deaminase family. As to quaternary structure, homotrimer.

It catalyses the reaction dCTP + H2O + H(+) = dUTP + NH4(+). The protein operates within pyrimidine metabolism; dUMP biosynthesis; dUMP from dCTP (dUTP route): step 1/2. In terms of biological role, catalyzes the deamination of dCTP to dUTP. This is dCTP deaminase from Erwinia tasmaniensis (strain DSM 17950 / CFBP 7177 / CIP 109463 / NCPPB 4357 / Et1/99).